Reading from the N-terminus, the 198-residue chain is MHICIINSIIWFIVKYKKKHGYSLFVEFTHAYGIGEGTSVNMRGVNIGYIKNLQINSNSVLVSIYIKSEKILIPKNSIIETNQTSLFNNTIIDIIPLEKINNYSIRDFNVFNQNCYDLQIFCNNQYIIGDRGLNYDDLIRATTRIAQRFDDPRFFNLFYLFLQNTIEISDDFILTFNNISSMSYYLYIFCRDFLLNNI.

It is found in the plastid. It localises to the chloroplast. This is an uncharacterized protein from Antithamnion sp. (Red alga).